Consider the following 234-residue polypeptide: uncharacterized protein (234 aa).

The chain crosses the membrane as a helical span at residues 13–32 (KSINYYIFFFQYTLVYNTIQ). 2 disordered regions span residues 102–130 (HSKT…SSNS) and 159–185 (ESDS…SEYE). The segment covering 103–130 (SKTTSLPFSSSSPQSSSSSSSSSSSSNS) has biased composition (low complexity). Over residues 167 to 185 (EFDSESNSDFDSESESEYE) the composition is skewed to acidic residues.

It is found in the membrane. This is an uncharacterized protein from Dictyostelium discoideum (Social amoeba).